A 1534-amino-acid chain; its full sequence is Alpha-2-macroglobulin homolog (1534 aa).

An N-terminal signal peptide occupies residues 1–38 (MDTQRFQSQFHWHLSFKFSGAIAACLSLSLVGTGLANA).

The protein belongs to the protease inhibitor I39 (alpha-2-macroglobulin) family. Bacterial alpha-2-macroglobulin subfamily.

This chain is Alpha-2-macroglobulin homolog (yfaS), found in Escherichia coli O157:H7.